A 184-amino-acid polypeptide reads, in one-letter code: Threonylcarbamoyl-AMP synthase (184 aa).

In terms of domain architecture, YrdC-like spans 3–184 (AWFIQKAVSV…DAATGAILRQ (182 aa)).

This sequence belongs to the SUA5 family. TsaC subfamily.

The protein localises to the cytoplasm. It carries out the reaction L-threonine + hydrogencarbonate + ATP = L-threonylcarbamoyladenylate + diphosphate + H2O. In terms of biological role, required for the formation of a threonylcarbamoyl group on adenosine at position 37 (t(6)A37) in tRNAs that read codons beginning with adenine. Catalyzes the conversion of L-threonine, HCO(3)(-)/CO(2) and ATP to give threonylcarbamoyl-AMP (TC-AMP) as the acyladenylate intermediate, with the release of diphosphate. In Hahella chejuensis (strain KCTC 2396), this protein is Threonylcarbamoyl-AMP synthase.